The following is a 194-amino-acid chain: Leucyl/phenylalanyl-tRNA--protein transferase (194 aa).

The protein belongs to the L/F-transferase family.

It is found in the cytoplasm. The catalysed reaction is N-terminal L-lysyl-[protein] + L-leucyl-tRNA(Leu) = N-terminal L-leucyl-L-lysyl-[protein] + tRNA(Leu) + H(+). It carries out the reaction N-terminal L-arginyl-[protein] + L-leucyl-tRNA(Leu) = N-terminal L-leucyl-L-arginyl-[protein] + tRNA(Leu) + H(+). It catalyses the reaction L-phenylalanyl-tRNA(Phe) + an N-terminal L-alpha-aminoacyl-[protein] = an N-terminal L-phenylalanyl-L-alpha-aminoacyl-[protein] + tRNA(Phe). In terms of biological role, functions in the N-end rule pathway of protein degradation where it conjugates Leu, Phe and, less efficiently, Met from aminoacyl-tRNAs to the N-termini of proteins containing an N-terminal arginine or lysine. This is Leucyl/phenylalanyl-tRNA--protein transferase from Chlorobaculum tepidum (strain ATCC 49652 / DSM 12025 / NBRC 103806 / TLS) (Chlorobium tepidum).